Here is a 481-residue protein sequence, read N- to C-terminus: Aspartyl/glutamyl-tRNA(Asn/Gln) amidotransferase subunit B (481 aa).

It belongs to the GatB/GatE family. GatB subfamily. As to quaternary structure, heterotrimer of A, B and C subunits.

It catalyses the reaction L-glutamyl-tRNA(Gln) + L-glutamine + ATP + H2O = L-glutaminyl-tRNA(Gln) + L-glutamate + ADP + phosphate + H(+). The catalysed reaction is L-aspartyl-tRNA(Asn) + L-glutamine + ATP + H2O = L-asparaginyl-tRNA(Asn) + L-glutamate + ADP + phosphate + 2 H(+). Its function is as follows. Allows the formation of correctly charged Asn-tRNA(Asn) or Gln-tRNA(Gln) through the transamidation of misacylated Asp-tRNA(Asn) or Glu-tRNA(Gln) in organisms which lack either or both of asparaginyl-tRNA or glutaminyl-tRNA synthetases. The reaction takes place in the presence of glutamine and ATP through an activated phospho-Asp-tRNA(Asn) or phospho-Glu-tRNA(Gln). In Fusobacterium nucleatum subsp. nucleatum (strain ATCC 25586 / DSM 15643 / BCRC 10681 / CIP 101130 / JCM 8532 / KCTC 2640 / LMG 13131 / VPI 4355), this protein is Aspartyl/glutamyl-tRNA(Asn/Gln) amidotransferase subunit B.